Reading from the N-terminus, the 109-residue chain is Putative RNase MJ1380 (109 aa).

Residues arginine 76 and histidine 81 contribute to the active site. The RX(4)HXY motif signature appears at 76-83; that stretch reads RNILIHKY. At tyrosine 83 the chain carries O-di-AMP-tyrosine.

The protein belongs to the HepT RNase toxin family. Homodimer, probably forms a complex with cognate antitoxin MJ1379. Modified by cognate antitoxin MJ1379; probably at least 2 successive AMPylation events occur on Tyr-83.

Probable toxic component of a putative type VII toxin-antitoxin (TA) system, probably an RNase. Probably neutralized by cognate antitoxin MJ1379. Neutralization may be due to AMPylation by antitoxin MJ1379. This is Putative RNase MJ1380 from Methanocaldococcus jannaschii (strain ATCC 43067 / DSM 2661 / JAL-1 / JCM 10045 / NBRC 100440) (Methanococcus jannaschii).